The primary structure comprises 237 residues: Large ribosomal subunit protein uL3 (237 aa).

2 disordered regions span residues 133 to 155 and 213 to 237; these read ASHG…DPGK and PENA…EGAE. Polar residues predominate over residues 135–150; it reads HGNSITHRSHGSTGQR. Q151 is modified (N5-methylglutamine). The span at 220 to 237 shows a compositional bias: low complexity; sequence AGLRAGAKAEAAATEGAE.

It belongs to the universal ribosomal protein uL3 family. In terms of assembly, part of the 50S ribosomal subunit. Forms a cluster with proteins L14 and L19. Post-translationally, methylated by PrmB.

Its function is as follows. One of the primary rRNA binding proteins, it binds directly near the 3'-end of the 23S rRNA, where it nucleates assembly of the 50S subunit. The chain is Large ribosomal subunit protein uL3 from Brucella canis (strain ATCC 23365 / NCTC 10854 / RM-666).